A 61-amino-acid polypeptide reads, in one-letter code: Small ribosomal subunit protein uS14 (61 aa).

Zn(2+) is bound by residues C24, C27, C40, and C43.

This sequence belongs to the universal ribosomal protein uS14 family. Zinc-binding uS14 subfamily. In terms of assembly, part of the 30S ribosomal subunit. Contacts proteins S3 and S10. Requires Zn(2+) as cofactor.

Its function is as follows. Binds 16S rRNA, required for the assembly of 30S particles and may also be responsible for determining the conformation of the 16S rRNA at the A site. This Mycoplasma mobile (strain ATCC 43663 / 163K / NCTC 11711) (Mesomycoplasma mobile) protein is Small ribosomal subunit protein uS14.